Consider the following 390-residue polypeptide: tRNA-specific 2-thiouridylase MnmA (390 aa).

ATP-binding positions include 29–36 and Leu-55; that span reads GLSGGVDS. Cys-116 acts as the Nucleophile in catalysis. The cysteines at positions 116 and 225 are disulfide-linked. An ATP-binding site is contributed by Gly-141. The interval 175-177 is interaction with tRNA; sequence KDQ. Catalysis depends on Cys-225, which acts as the Cysteine persulfide intermediate. Positions 330-331 are interaction with tRNA; it reads RY.

This sequence belongs to the MnmA/TRMU family.

The protein localises to the cytoplasm. It carries out the reaction S-sulfanyl-L-cysteinyl-[protein] + uridine(34) in tRNA + AH2 + ATP = 2-thiouridine(34) in tRNA + L-cysteinyl-[protein] + A + AMP + diphosphate + H(+). Catalyzes the 2-thiolation of uridine at the wobble position (U34) of tRNA, leading to the formation of s(2)U34. In Prochlorococcus marinus (strain MIT 9515), this protein is tRNA-specific 2-thiouridylase MnmA.